The following is a 311-amino-acid chain: Ribonuclease HIII (311 aa).

In terms of domain architecture, RNase H type-2 spans 95-311; sequence MSIVGSDEVG…NTEKAFRLLK (217 aa). D101, E102, and D206 together coordinate a divalent metal cation.

The protein belongs to the RNase HII family. RnhC subfamily. Mn(2+) serves as cofactor. Requires Mg(2+) as cofactor.

Its subcellular location is the cytoplasm. The enzyme catalyses Endonucleolytic cleavage to 5'-phosphomonoester.. Its function is as follows. Endonuclease that specifically degrades the RNA of RNA-DNA hybrids. The protein is Ribonuclease HIII of Bacillus cereus (strain ZK / E33L).